The following is a 419-amino-acid chain: Akuammiline synthase 1 (419 aa).

His151 acts as the Proton acceptor in catalysis. The short motif at Thr206–Ala213 is the Nuclear localization signal element. Asp359 serves as the catalytic Proton acceptor.

The protein belongs to the plant acyltransferase family. Monomer.

It localises to the cytoplasm. The protein resides in the nucleus. The catalysed reaction is rhazimol + acetyl-CoA = akuammiline + CoA + H(+). It participates in alkaloid biosynthesis. Functionally, acyltransferase involved in the biosynthesis of akuammilan monoterpene indole alkaloids (MIAs) natural products, components with various biological properties such as antidiabetic, antibacterial, anti-inflammatory, anticancer, and antimalarial activities. Catalyzes the conversion of rhazimol to akuammiline. The sequence is that of Akuammiline synthase 1 from Alstonia scholaris (Dogbane).